A 203-amino-acid chain; its full sequence is Suppressor/enhancer of lin-12 protein 9 (203 aa).

A signal peptide spans Met1–Ser18. Over Tyr19 to Arg170 the chain is Lumenal. The GOLD domain occupies Glu28–Ile110. Residues Val171–Phe191 form a helical membrane-spanning segment. Over Tyr192–Val203 the chain is Cytoplasmic.

It belongs to the EMP24/GP25L family.

It localises to the cytoplasmic vesicle membrane. The protein resides in the cytoplasmic vesicle. It is found in the COPI-coated vesicle membrane. Its subcellular location is the golgi apparatus membrane. In terms of biological role, may have a role in the negative regulation of lin-12 and glp-1 transport to the cell surface. May also have a role in a quality control mechanism for endoplasmic reticulum-Golgi transport; the budding of coatomer-coated and other species of coated vesicles, could bind cargo molecules to collect them into budding vesicles. Involved in regulating the expression of proteasomal subunits such as rpt-3 in order to confer resistance to proteasomal dysfunction. This chain is Suppressor/enhancer of lin-12 protein 9 (sel-9), found in Caenorhabditis elegans.